Here is a 430-residue protein sequence, read N- to C-terminus: Glutamate-1-semialdehyde 2,1-aminomutase (430 aa).

Lysine 267 is modified (N6-(pyridoxal phosphate)lysine).

It belongs to the class-III pyridoxal-phosphate-dependent aminotransferase family. HemL subfamily. In terms of assembly, homodimer. Requires pyridoxal 5'-phosphate as cofactor.

It localises to the cytoplasm. It carries out the reaction (S)-4-amino-5-oxopentanoate = 5-aminolevulinate. Its pathway is porphyrin-containing compound metabolism; protoporphyrin-IX biosynthesis; 5-aminolevulinate from L-glutamyl-tRNA(Glu): step 2/2. The polypeptide is Glutamate-1-semialdehyde 2,1-aminomutase (Lawsonia intracellularis (strain PHE/MN1-00)).